A 159-amino-acid chain; its full sequence is Ribosomal RNA large subunit methyltransferase H (159 aa).

Residues leucine 76, glycine 108, and phenylalanine 127–phenylalanine 132 contribute to the S-adenosyl-L-methionine site.

It belongs to the RNA methyltransferase RlmH family. As to quaternary structure, homodimer.

The protein localises to the cytoplasm. The catalysed reaction is pseudouridine(1915) in 23S rRNA + S-adenosyl-L-methionine = N(3)-methylpseudouridine(1915) in 23S rRNA + S-adenosyl-L-homocysteine + H(+). Its function is as follows. Specifically methylates the pseudouridine at position 1915 (m3Psi1915) in 23S rRNA. The chain is Ribosomal RNA large subunit methyltransferase H from Clostridium botulinum (strain Kyoto / Type A2).